A 100-amino-acid polypeptide reads, in one-letter code: Small ribosomal subunit protein uS14c (100 aa).

Belongs to the universal ribosomal protein uS14 family. As to quaternary structure, part of the 30S ribosomal subunit.

It localises to the plastid. It is found in the chloroplast. Its function is as follows. Binds 16S rRNA, required for the assembly of 30S particles. The chain is Small ribosomal subunit protein uS14c from Capsella bursa-pastoris (Shepherd's purse).